The following is a 152-amino-acid chain: SUZ RNA-binding domain-containing (152 aa).

An N-acetylmethionine modification is found at Met1. Disordered stretches follow at residues 30–86 and 99–152; these read TQKE…LPVK and RKRI…KQRR. Residues Ser37, Ser39, and Ser51 each carry the phosphoserine modification. The 66-residue stretch at 42 to 107 folds into the SUZ domain; it reads KVPIVIQDDS…ARKRILGSAS (66 aa). Over residues 66 to 79 the composition is skewed to polar residues; it reads PTSNGVVSGPNSAS. Residues Ser105 and Ser107 each carry the phosphoserine modification. Positions 111–152 constitute an SUZ-C domain; the sequence is EQEKPILDRPTRISQPEDSRQPNNVIRQPLGPDGSQGFKQRR. Over residues 113–130 the composition is skewed to basic and acidic residues; sequence EKPILDRPTRISQPEDSR.

This sequence belongs to the SZRD1 family.

This Bos taurus (Bovine) protein is SUZ RNA-binding domain-containing (SZRD1).